Consider the following 69-residue polypeptide: Toxin Lc a (69 aa).

4 cysteine pairs are disulfide-bonded: Cys-3-Cys-20, Cys-13-Cys-41, Cys-45-Cys-56, and Cys-57-Cys-62.

Belongs to the three-finger toxin family. Long-chain subfamily. Type II alpha-neurotoxin sub-subfamily. In terms of tissue distribution, expressed by the venom gland.

The protein resides in the secreted. Functionally, binds with high affinity to muscular nicotinic acetylcholine receptors (nAChRs), whereas it binds with a low affinity to neuronal alpha-7/CHRNA7 nAChRs. The polypeptide is Toxin Lc a (Laticauda colubrina (Yellow-lipped sea krait)).